A 591-amino-acid polypeptide reads, in one-letter code: Ketol-acid reductoisomerase, chloroplastic (591 aa).

A disordered region spans residues 1–20 (MAAATSSIAPSLSCPSPSSS). The transit peptide at 1–52 (MAAATSSIAPSLSCPSPSSSSKTLWSSKARTLALPNIGFLSSSSKSLRSLTA) directs the protein to the chloroplast. Thr53 bears the N-acetylthreonine mark. Positions 102 to 300 (VRGGRDLFKH…ALGSPFTFAT (199 aa)) constitute a KARI N-terminal Rossmann domain. NADP(+)-binding positions include 123–130 (GVIGWGSQ), 156–161 (RKGSRS), and 195–199 (SDAAQ). Residue His220 is part of the active site. 2 consecutive KARI C-terminal knotted domains span residues 301 to 449 (TLEQ…RPAG) and 450 to 586 (DLGP…RPEL). Mg(2+) contacts are provided by Asp309, Glu313, Glu486, and Glu490. Ser512 provides a ligand contact to substrate.

The protein belongs to the ketol-acid reductoisomerase family. As to quaternary structure, homodimer. Mg(2+) is required as a cofactor.

The protein resides in the plastid. Its subcellular location is the chloroplast. It catalyses the reaction (2R)-2,3-dihydroxy-3-methylbutanoate + NADP(+) = (2S)-2-acetolactate + NADPH + H(+). The catalysed reaction is (2R,3R)-2,3-dihydroxy-3-methylpentanoate + NADP(+) = (S)-2-ethyl-2-hydroxy-3-oxobutanoate + NADPH + H(+). The protein operates within amino-acid biosynthesis; L-isoleucine biosynthesis; L-isoleucine from 2-oxobutanoate: step 2/4. It functions in the pathway amino-acid biosynthesis; L-valine biosynthesis; L-valine from pyruvate: step 2/4. In Arabidopsis thaliana (Mouse-ear cress), this protein is Ketol-acid reductoisomerase, chloroplastic.